We begin with the raw amino-acid sequence, 242 residues long: UPF0246 protein SPD_1378 (242 aa).

It belongs to the UPF0246 family.

This chain is UPF0246 protein SPD_1378, found in Streptococcus pneumoniae serotype 2 (strain D39 / NCTC 7466).